The primary structure comprises 98 residues: MNAERLMQVLLAPVVTEKATFVAEKHQQIAFRVVADATKPEIKAAVELLFKVQVEAVQVLNRKGKVKRFGRFVGRRRNERKAYVSLKEGQEIDFAEVK.

The protein belongs to the universal ribosomal protein uL23 family. In terms of assembly, part of the 50S ribosomal subunit. Contacts protein L29, and trigger factor when it is bound to the ribosome.

One of the early assembly proteins it binds 23S rRNA. One of the proteins that surrounds the polypeptide exit tunnel on the outside of the ribosome. Forms the main docking site for trigger factor binding to the ribosome. In Bordetella avium (strain 197N), this protein is Large ribosomal subunit protein uL23.